The sequence spans 328 residues: Tetraacyldisaccharide 4'-kinase (328 aa).

ATP is bound at residue 55-62 (TAGGNGKT).

The protein belongs to the LpxK family.

It carries out the reaction a lipid A disaccharide + ATP = a lipid IVA + ADP + H(+). The protein operates within glycolipid biosynthesis; lipid IV(A) biosynthesis; lipid IV(A) from (3R)-3-hydroxytetradecanoyl-[acyl-carrier-protein] and UDP-N-acetyl-alpha-D-glucosamine: step 6/6. In terms of biological role, transfers the gamma-phosphate of ATP to the 4'-position of a tetraacyldisaccharide 1-phosphate intermediate (termed DS-1-P) to form tetraacyldisaccharide 1,4'-bis-phosphate (lipid IVA). This chain is Tetraacyldisaccharide 4'-kinase, found in Shigella dysenteriae serotype 1 (strain Sd197).